The chain runs to 244 residues: 14-3-3 protein beta/alpha-A (244 aa).

Position 1 is an N-acetylmethionine (methionine 1).

The protein belongs to the 14-3-3 family. In terms of assembly, homodimer, and heterodimer with other family members.

The protein resides in the cytoplasm. Adapter protein implicated in the regulation of a large spectrum of both general and specialized signaling pathways. Binds to a large number of partners, usually by recognition of a phosphoserine or phosphothreonine motif. Binding generally results in the modulation of the activity of the binding partner. The sequence is that of 14-3-3 protein beta/alpha-A (ywhab-a) from Xenopus laevis (African clawed frog).